Here is a 254-residue protein sequence, read N- to C-terminus: Serine acetyltransferase (254 aa).

It belongs to the transferase hexapeptide repeat family.

The protein localises to the cytoplasm. The enzyme catalyses L-serine + acetyl-CoA = O-acetyl-L-serine + CoA. Its pathway is amino-acid biosynthesis; L-cysteine biosynthesis; L-cysteine from L-serine: step 1/2. The polypeptide is Serine acetyltransferase (cysE) (Buchnera aphidicola subsp. Baizongia pistaciae (strain Bp)).